The following is a 347-amino-acid chain: 4-hydroxy-2-oxovalerate aldolase 1 (347 aa).

The 253-residue stretch at 11 to 263 (VVLHDMCLRD…ETGVDLFKLM (253 aa)) folds into the Pyruvate carboxyltransferase domain. 19 to 20 (RD) contributes to the substrate binding site. Asp20 lines the Mn(2+) pocket. The Proton acceptor role is filled by His23. Substrate-binding residues include Ser173 and His202. The Mn(2+) site is built by His202 and His204. Tyr293 contacts substrate.

The protein belongs to the 4-hydroxy-2-oxovalerate aldolase family.

It carries out the reaction (S)-4-hydroxy-2-oxopentanoate = acetaldehyde + pyruvate. This is 4-hydroxy-2-oxovalerate aldolase 1 (lapG) from Azoarcus sp. (strain BH72).